Here is an 88-residue protein sequence, read N- to C-terminus: U2-ctenitoxin-Pn1a (88 aa).

A signal peptide spans 1–17 (MKVAILILSILVLAVAS). A propeptide spanning residues 18 to 34 (ETIEEYRDDFAVEELER) is cleaved from the precursor. 5 disulfide bridges follow: Cys37-Cys51, Cys44-Cys57, Cys48-Cys86, Cys50-Cys71, and Cys59-Cys69. Residue Lys88 is a propeptide.

In terms of tissue distribution, expressed by the venom gland.

It localises to the secreted. In terms of biological role, inhibits voltage-gated sodium channels (Nav). Causes scratching, lacrimation, hypersalivation, sweating and agitation followed by spastic paralysis of the anterior and posterior extremities and death at dose levels of 1.62 mg/mouse. Insecticidal to the larval and adult forms of the house fly. The polypeptide is U2-ctenitoxin-Pn1a (Phoneutria nigriventer (Brazilian armed spider)).